The chain runs to 473 residues: Photosystem II CP43 reaction center protein (473 aa).

Positions 1–14 (MKTLYSLRRFYPVE) are excised as a propeptide. Thr-15 carries the post-translational modification N-acetylthreonine. A Phosphothreonine modification is found at Thr-15. Transmembrane regions (helical) follow at residues 69-93 (LFEVAHFVPEKPMYEQGLILLPHLA), 134-155 (LLGPETLEESFPFFGYVWKDRN), 178-200 (KALYFGGVYDTWAPGGGDVRKIT), 255-275 (KPFAWARRALVWSGEAYLSYS), and 291-312 (WFNNTAYPSEFYGPTGPEASQA). Glu-367 serves as a coordination point for [CaMn4O5] cluster. A helical membrane pass occupies residues 447–471 (RARAAAAGFEKGIDRDFEPVLFMTP).

This sequence belongs to the PsbB/PsbC family. PsbC subfamily. In terms of assembly, PSII is composed of 1 copy each of membrane proteins PsbA, PsbB, PsbC, PsbD, PsbE, PsbF, PsbH, PsbI, PsbJ, PsbK, PsbL, PsbM, PsbT, PsbX, PsbY, PsbZ, Psb30/Ycf12, at least 3 peripheral proteins of the oxygen-evolving complex and a large number of cofactors. It forms dimeric complexes. Binds multiple chlorophylls and provides some of the ligands for the Ca-4Mn-5O cluster of the oxygen-evolving complex. It may also provide a ligand for a Cl- that is required for oxygen evolution. PSII binds additional chlorophylls, carotenoids and specific lipids. is required as a cofactor.

Its subcellular location is the plastid. It localises to the chloroplast thylakoid membrane. Functionally, one of the components of the core complex of photosystem II (PSII). It binds chlorophyll and helps catalyze the primary light-induced photochemical processes of PSII. PSII is a light-driven water:plastoquinone oxidoreductase, using light energy to abstract electrons from H(2)O, generating O(2) and a proton gradient subsequently used for ATP formation. The sequence is that of Photosystem II CP43 reaction center protein from Cucumis sativus (Cucumber).